Consider the following 182-residue polypeptide: MTNQQGRLRTRVAVFACVAAAALIVDQLTKAWAMAALSNGQTIRVIPGLLSFTLVRNPGASLGMGSGATWVISLLAVVACVALAVAGVRTVSMKWSVAISFAFAGALGNLIDRVMYADGFLDGKVVDFLNYGWSVGNVADIYLVVAGVVLVILILMGEPFSHKDLIEQSDESLQSEPEADAK.

3 consecutive transmembrane segments (helical) span residues 12–32 (VAVFACVAAAALIVDQLTKAW), 68–88 (ATWVISLLAVVACVALAVAGV), and 91–111 (VSMKWSVAISFAFAGALGNLI). Catalysis depends on residues D127 and D140. A helical transmembrane segment spans residues 135-155 (VGNVADIYLVVAGVVLVILIL).

It belongs to the peptidase A8 family.

Its subcellular location is the cell membrane. The catalysed reaction is Release of signal peptides from bacterial membrane prolipoproteins. Hydrolyzes -Xaa-Yaa-Zaa-|-(S,diacylglyceryl)Cys-, in which Xaa is hydrophobic (preferably Leu), and Yaa (Ala or Ser) and Zaa (Gly or Ala) have small, neutral side chains.. It functions in the pathway protein modification; lipoprotein biosynthesis (signal peptide cleavage). This protein specifically catalyzes the removal of signal peptides from prolipoproteins. The chain is Lipoprotein signal peptidase from Bifidobacterium longum (strain DJO10A).